The following is a 1092-amino-acid chain: Elongation factor 3 (1092 aa).

Residue Val92 coordinates ADP. HEAT repeat units lie at residues 95-133, 138-175, 177-214, 218-255, 257-293, 294-331, and 333-370; these read MVKTKILHGIATGLHNTKQPVAREGAITAIETLIKSPVS, PYMITFIPVLLERLSDKAKTVCLAADSALKALITRLTP, ATKQVLPLLLAGIEYSQKWQTKVGALELMQSLSKTAPR, TAVPDLVPPLSEVMHDTKAEAKNAGRQTMEAICELINN, DIEKFIPALIDTIANPEKVPDTVHLLGATTFVSEVLP, PTLAIMVPLLSRGLNERQTAIKRKAAVIIINMCKLVEK, and QIIAPFLPRLLPTLEKIQDDVADPECRQVCQNATKILT. Residue Glu454 participates in ADP binding. ABC transporter domains are found at residues 486-704 and 730-1044; these read EELC…YYEL and LKVQ…DKNK. The ADP site is built by Asn766, Glu973, Asn976, and His1002. 2 disordered regions span residues 1023–1044 and 1063–1092; these read TPTGHNWVSGQGSGPRLEDKNK and SKLSGKDLRKKRKEREARRKRGEEVSDDDE. Residues 1063–1075 show a composition bias toward basic residues; sequence SKLSGKDLRKKRK. Residues 1076 to 1086 are compositionally biased toward basic and acidic residues; it reads EREARRKRGEE.

It belongs to the ABC transporter superfamily. ABCF family. EF3 subfamily.

It localises to the cytoplasm. It is found in the cytosol. It carries out the reaction ATP + H2O = ADP + phosphate + H(+). The protein operates within protein biosynthesis; polypeptide chain elongation. In terms of biological role, ribosome-dependent ATPase that functions in cytoplasmic translation elongation. Required for the ATP-dependent release of deacylated tRNA from the ribosomal E-site during protein biosynthesis. Stimulates the eEF1A-dependent binding of aminoacyl-tRNA to the ribosomal A-site, which has reduced affinity for tRNA as long as the E-site is occupied. Assists translation termination by stimulating the release of nascent protein from the ribosome by release factors. The polypeptide is Elongation factor 3 (Gonapodya prolifera (strain JEL478) (Monoblepharis prolifera)).